The following is a 557-amino-acid chain: 2,3-bisphosphoglycerate-independent phosphoglycerate mutase 1 (557 aa).

Residues Asp27 and Ser80 each contribute to the Mn(2+) site. Ser80 functions as the Phosphoserine intermediate in the catalytic mechanism. Residues His139, 169–170 (RD), Arg205, Arg212, 285–288 (RADR), and Lys360 contribute to the substrate site. Positions 429, 433, 470, 471, and 500 each coordinate Mn(2+).

Belongs to the BPG-independent phosphoglycerate mutase family. As to quaternary structure, monomer. Mn(2+) is required as a cofactor.

Its subcellular location is the cytoplasm. The enzyme catalyses (2R)-2-phosphoglycerate = (2R)-3-phosphoglycerate. It participates in carbohydrate degradation; glycolysis; pyruvate from D-glyceraldehyde 3-phosphate: step 3/5. In terms of biological role, catalyzes the interconversion of 2-phosphoglycerate (2-PGA) and 3-phosphoglycerate (3-PGA). Required for guard cell function (e.g. blue light-, abscisic acid- (ABA), and low CO(2)-regulated stomatal movements) and fertility (e.g. pollen grains production). The polypeptide is 2,3-bisphosphoglycerate-independent phosphoglycerate mutase 1 (PGM1) (Arabidopsis thaliana (Mouse-ear cress)).